The following is a 963-amino-acid chain: Respiratory burst oxidase homolog protein A (963 aa).

The span at 1 to 12 (MRGLPGHERRWT) shows a compositional bias: basic and acidic residues. The interval 1–36 (MRGLPGHERRWTSDTVSSGKDLSGESSPGTDSGNIS) is disordered. The Cytoplasmic segment spans residues 1 to 399 (MRGLPGHERR…VYSLQENWKR (399 aa)). Residues 13 to 36 (SDTVSSGKDLSGESSPGTDSGNIS) are compositionally biased toward polar residues. 2 EF-hand-like regions span residues 219-227 (AKDGYLYRS) and 253-264 (RRLKVDKISKEE). Residues 276–311 (SFDSRLQIFFDMVDKNEDGRIGEEEVKEIIMLSASA) enclose the EF-hand domain. The Ca(2+) site is built by aspartate 289, asparagine 291, aspartate 293, arginine 295, and glutamate 300. The helical transmembrane segment at 400–420 (IWVLVLWILIMIGLFLWKFYL) threads the bilayer. Residues 421-435 (YKQKSAFQVMGYCLL) are Extracellular-facing. The chain crosses the membrane as a helical span at residues 436–456 (TAKGAAETLKFNMALILLPVC). A Ferric oxidoreductase domain is found at 438 to 595 (KGAAETLKFN…LLIIVYIVLI (158 aa)). The Cytoplasmic segment spans residues 457–482 (RNTITFLRSTKLSCFVPFDDNINFHK). A helical membrane pass occupies residues 483–503 (TVAAAIVTGIILHAGNHLVCD). Topologically, residues 504-535 (FPKLIHANNTNYQKYLVNDFGPSQPQYIDLVK) are extracellular. Residues 536-556 (GVEGVTGIIMVILMAIAFTLA) form a helical membrane-spanning segment. Over 557–583 (TRWFRRSLIKFPKPFDRLTGFNAFWYS) the chain is Cytoplasmic. Residues 584-604 (HHLLIIVYIVLIIHGTFLYLV) form a helical membrane-spanning segment. Over 605–759 (HNWYSKTTWM…APAQDYRKYD (155 aa)) the chain is Extracellular. Residues 634–754 (SGLYTVRLLK…DGPYGAPAQD (121 aa)) enclose the FAD-binding FR-type domain. The chain crosses the membrane as a helical span at residues 760 to 780 (VLLLVGLGIGATPFISILKDL). Topologically, residues 781–963 (LKNIVTMEEQ…TKFEFHKEHF (183 aa)) are cytoplasmic.

This sequence belongs to the RBOH (TC 5.B.1.3) family. As to quaternary structure, monomer and homodimer. Post-translationally, phosphorylated by CPK.

It localises to the cell membrane. Its function is as follows. Calcium-dependent NADPH oxidase that generates superoxide. Involved in the rapid and transient phase I oxidative burst induced by pathogen infection. The sequence is that of Respiratory burst oxidase homolog protein A (RBOHA) from Solanum tuberosum (Potato).